We begin with the raw amino-acid sequence, 399 residues long: Yellow-related salivary protein M10 (399 aa).

A signal peptide spans 1 to 18 (MKFILSVLALASFQHVFC). N-linked (GlcNAc...) asparagine glycosylation is found at Asn29 and Asn83.

It belongs to the major royal jelly protein family. In terms of tissue distribution, salivary gland (at protein level).

Its subcellular location is the secreted. Its function is as follows. Probably modulates blood feeding of sand flies on vertebrate species by binding and sequestering different mediators involved in the host response. Functions as a chemoattractant for host neutrophils; likely acts through a G-protein-coupled receptor and effect is dependent on calcium influx and phosphatidylinositol 3-kinases (PI3K) activity. (Microbial infection) Probably enhances infection caused by Leishmania species in the host through augmentation of host neutrophil recruitment into the skin. The protein is Yellow-related salivary protein M10 of Phlebotomus duboscqi (Sandfly).